The primary structure comprises 196 residues: Peptide deformylase (196 aa).

Residues cysteine 97 and histidine 139 each coordinate Fe cation. The active site involves glutamate 140. Position 143 (histidine 143) interacts with Fe cation. The span at 171 to 187 shows a compositional bias: basic and acidic residues; sequence LDAQEPKRAPHSPHTDA. A disordered region spans residues 171–196; the sequence is LDAQEPKRAPHSPHTDAQKPGAASDL.

Belongs to the polypeptide deformylase family. Fe(2+) serves as cofactor.

The catalysed reaction is N-terminal N-formyl-L-methionyl-[peptide] + H2O = N-terminal L-methionyl-[peptide] + formate. Its function is as follows. Removes the formyl group from the N-terminal Met of newly synthesized proteins. Requires at least a dipeptide for an efficient rate of reaction. N-terminal L-methionine is a prerequisite for activity but the enzyme has broad specificity at other positions. In Methylocella silvestris (strain DSM 15510 / CIP 108128 / LMG 27833 / NCIMB 13906 / BL2), this protein is Peptide deformylase.